A 626-amino-acid polypeptide reads, in one-letter code: MADINSKLEIGVTTGPIRGSRKIHVESARFPGLTVAMREIQLEPSSGEPPVRVYDTSGPYTDPKVTIDIAAGLPTLRRDWIMARGDVEEYDAREVKPEDNGLKGPDRSAGVPPFPNVVKRPLRAKAGQNVSQMHYARRGIITPEMEYVAIRENLGRKQAKEAMIRDGQDWGASIPDYVTPEFVRDEVARGRAIIPSNINHPESEPMAIGRNFLVKINANIGNSAVASDVASEVDKMVWSIRWGADTVMDLSTGRNIHDTREWILRNSPVPIGTVPIYQALEKVGGVAEDLTWEVFRDTLIEQAEQGVDYFTIHAGVRLPYIPLAAKRMTGIVSRGGSIMAKWCLAHHKESFLYENFDEITEIMKAYDVAYSLGDGLRPGSIYDANDEAQFAELYTLGELTKRAWEQDVQVMIEGPGHVPMHKIKENMTKQLEACGEAPFYTLGPLVTDIAPGYDHITSGIGAAQIGWYGTAMLCYVTPKEHLGLPDRDDVKVGVVTYKLAAHAADLAKGHPAAQARDDALSKARFEFRWRDQFNLSLDPETAEQYHDQTLPAEGAKTAHFCSMCGPKFCSMKISQEVRDFAAKQNAGIETFVANEAEAEAGMKAMSDKYDEMGRELYIGAGGREHD.

Residues 92 to 106 (AREVKPEDNGLKGPD) show a composition bias toward basic and acidic residues. The segment at 92–117 (AREVKPEDNGLKGPDRSAGVPPFPNV) is disordered. Substrate contacts are provided by residues N219, M248, Y277, H313, 333–335 (SRG), 374–377 (DGLR), and E413. Residue H417 participates in Zn(2+) binding. Position 440 (Y440) interacts with substrate. H481 serves as a coordination point for Zn(2+). The [4Fe-4S] cluster site is built by C561, C564, and C569.

Belongs to the ThiC family. Homodimer. [4Fe-4S] cluster is required as a cofactor.

The catalysed reaction is 5-amino-1-(5-phospho-beta-D-ribosyl)imidazole + S-adenosyl-L-methionine = 4-amino-2-methyl-5-(phosphooxymethyl)pyrimidine + CO + 5'-deoxyadenosine + formate + L-methionine + 3 H(+). It participates in cofactor biosynthesis; thiamine diphosphate biosynthesis. Functionally, catalyzes the synthesis of the hydroxymethylpyrimidine phosphate (HMP-P) moiety of thiamine from aminoimidazole ribotide (AIR) in a radical S-adenosyl-L-methionine (SAM)-dependent reaction. This Novosphingobium aromaticivorans (strain ATCC 700278 / DSM 12444 / CCUG 56034 / CIP 105152 / NBRC 16084 / F199) protein is Phosphomethylpyrimidine synthase.